The chain runs to 154 residues: 3-hydroxyacyl-[acyl-carrier-protein] dehydratase FabZ (154 aa).

His57 is a catalytic residue.

It belongs to the thioester dehydratase family. FabZ subfamily.

The protein resides in the cytoplasm. It catalyses the reaction a (3R)-hydroxyacyl-[ACP] = a (2E)-enoyl-[ACP] + H2O. Its function is as follows. Involved in unsaturated fatty acids biosynthesis. Catalyzes the dehydration of short chain beta-hydroxyacyl-ACPs and long chain saturated and unsaturated beta-hydroxyacyl-ACPs. This chain is 3-hydroxyacyl-[acyl-carrier-protein] dehydratase FabZ, found in Sinorhizobium medicae (strain WSM419) (Ensifer medicae).